The sequence spans 360 residues: Phospho-N-acetylmuramoyl-pentapeptide-transferase (360 aa).

Transmembrane regions (helical) follow at residues 27-47 (IVSL…LIAW), 72-92 (PTMG…MWAY), 94-114 (SNPY…VGFI), 132-152 (WKYF…FAVG), 168-188 (IMPQ…VGTS), 199-219 (GLAI…AWAT), 235-255 (FAGE…GFLW), 263-283 (VFMG…IAVL), 288-308 (FLLL…ILQV), and 338-358 (VIVR…ATLK).

It belongs to the glycosyltransferase 4 family. MraY subfamily. Mg(2+) is required as a cofactor.

It localises to the cell inner membrane. The catalysed reaction is UDP-N-acetyl-alpha-D-muramoyl-L-alanyl-gamma-D-glutamyl-meso-2,6-diaminopimeloyl-D-alanyl-D-alanine + di-trans,octa-cis-undecaprenyl phosphate = di-trans,octa-cis-undecaprenyl diphospho-N-acetyl-alpha-D-muramoyl-L-alanyl-D-glutamyl-meso-2,6-diaminopimeloyl-D-alanyl-D-alanine + UMP. It functions in the pathway cell wall biogenesis; peptidoglycan biosynthesis. Catalyzes the initial step of the lipid cycle reactions in the biosynthesis of the cell wall peptidoglycan: transfers peptidoglycan precursor phospho-MurNAc-pentapeptide from UDP-MurNAc-pentapeptide onto the lipid carrier undecaprenyl phosphate, yielding undecaprenyl-pyrophosphoryl-MurNAc-pentapeptide, known as lipid I. The chain is Phospho-N-acetylmuramoyl-pentapeptide-transferase from Sodalis glossinidius (strain morsitans).